Consider the following 215-residue polypeptide: Adenylate kinase (215 aa).

10–15 lines the ATP pocket; sequence GTGKGT. Residues 30-59 form an NMP region; the sequence is STGHILRKISTKKTLFGEKIKNIINSGKLV. AMP is bound by residues Thr-31, Arg-36, 57 to 59, 85 to 88, and Gln-92; these read KLV and GFPR. The LID stretch occupies residues 122–157; sequence TRTINPITGTIYNNVIQKNSELKNLKINTLKSRLDD. ATP contacts are provided by residues Arg-123 and 132–133; that span reads IY. Positions 154 and 165 each coordinate AMP. Asn-198 is an ATP binding site.

It belongs to the adenylate kinase family. In terms of assembly, monomer.

It localises to the cytoplasm. The enzyme catalyses AMP + ATP = 2 ADP. It functions in the pathway purine metabolism; AMP biosynthesis via salvage pathway; AMP from ADP: step 1/1. Functionally, catalyzes the reversible transfer of the terminal phosphate group between ATP and AMP. Plays an important role in cellular energy homeostasis and in adenine nucleotide metabolism. The protein is Adenylate kinase of Buchnera aphidicola subsp. Baizongia pistaciae (strain Bp).